The chain runs to 725 residues: uncharacterized protein (725 aa).

In terms of domain architecture, FtsK spans 363-556; it reads GTYVEIPLYS…FVTTRPEDSC (194 aa). ATP is bound at residue 382 to 389; sequence GRTRGGKS.

The protein belongs to the FtsK/SpoIIIE/SftA family.

Probable DNA motor protein. May track DNA in a ATP-dependent manner by generating positive supercoils in front of it and negative supercoils behind it. This is an uncharacterized protein from Nostoc sp. (strain PCC 7120 / SAG 25.82 / UTEX 2576).